The primary structure comprises 175 residues: Signal peptidase complex catalytic subunit sec11 (175 aa).

Residues 1–14 lie on the Cytoplasmic side of the membrane; it reads MLSSLSSSITNARQ. Residues 15–31 traverse the membrane as a helical; Signal-anchor for type II membrane protein segment; it reads SIAQVLNFALVLSTAFM. Over 32 to 175 the chain is Lumenal; that stretch reads MWKGLSVVSA…MGLMVMIQRE (144 aa). Active-site charge relay system residues include S53, H92, and D117. Residues 161–172 form a C-terminal short (CTS) helix region; the sequence is VMLGLMGLMVMI.

Belongs to the peptidase S26B family. As to quaternary structure, component of the signal peptidase complex (SPC) composed of a catalytic subunit SEC11 and three accessory subunits SPC1, SPC2 and SPC3. The complex induces a local thinning of the ER membrane which is used to measure the length of the signal peptide (SP) h-region of protein substrates. This ensures the selectivity of the complex towards h-regions shorter than 18-20 amino acids. SPC associates with the translocon complex.

It localises to the endoplasmic reticulum membrane. It catalyses the reaction Cleavage of hydrophobic, N-terminal signal or leader sequences from secreted and periplasmic proteins.. Functionally, catalytic component of the signal peptidase complex (SPC) which catalyzes the cleavage of N-terminal signal sequences from nascent proteins as they are translocated into the lumen of the endoplasmic reticulum. Specifically cleaves N-terminal signal peptides that contain a hydrophobic alpha-helix (h-region) shorter than 18-20 amino acids. The polypeptide is Signal peptidase complex catalytic subunit sec11 (sec11) (Penicillium rubens (strain ATCC 28089 / DSM 1075 / NRRL 1951 / Wisconsin 54-1255) (Penicillium chrysogenum)).